The sequence spans 224 residues: 7-cyano-7-deazaguanine synthase (224 aa).

Residue 12-22 coordinates ATP; sequence LSGGLDSSTVT. Zn(2+) contacts are provided by Cys-193, Cys-201, Cys-204, and Cys-207.

It belongs to the QueC family. Requires Zn(2+) as cofactor.

It catalyses the reaction 7-carboxy-7-deazaguanine + NH4(+) + ATP = 7-cyano-7-deazaguanine + ADP + phosphate + H2O + H(+). The protein operates within purine metabolism; 7-cyano-7-deazaguanine biosynthesis. Its function is as follows. Catalyzes the ATP-dependent conversion of 7-carboxy-7-deazaguanine (CDG) to 7-cyano-7-deazaguanine (preQ(0)). In Prochlorococcus marinus (strain MIT 9515), this protein is 7-cyano-7-deazaguanine synthase.